Consider the following 121-residue polypeptide: Prefoldin subunit beta (121 aa).

This sequence belongs to the prefoldin subunit beta family. Heterohexamer of two alpha and four beta subunits.

It is found in the cytoplasm. In terms of biological role, molecular chaperone capable of stabilizing a range of proteins. Seems to fulfill an ATP-independent, HSP70-like function in archaeal de novo protein folding. The chain is Prefoldin subunit beta (pfdB) from Methanothermobacter thermautotrophicus (strain ATCC 29096 / DSM 1053 / JCM 10044 / NBRC 100330 / Delta H) (Methanobacterium thermoautotrophicum).